Reading from the N-terminus, the 206-residue chain is Histidine biosynthesis bifunctional protein HisIE (206 aa).

A phosphoribosyl-AMP cyclohydrolase region spans residues 1–117 (MGSETTAAGD…SCFPTAPSQF (117 aa)). Residues 118 to 206 (LGSLDALIAE…AVALLESRHK (89 aa)) form a phosphoribosyl-ATP pyrophosphohydrolase region.

It in the N-terminal section; belongs to the PRA-CH family. In the C-terminal section; belongs to the PRA-PH family.

The protein resides in the cytoplasm. It carries out the reaction 1-(5-phospho-beta-D-ribosyl)-ATP + H2O = 1-(5-phospho-beta-D-ribosyl)-5'-AMP + diphosphate + H(+). It catalyses the reaction 1-(5-phospho-beta-D-ribosyl)-5'-AMP + H2O = 1-(5-phospho-beta-D-ribosyl)-5-[(5-phospho-beta-D-ribosylamino)methylideneamino]imidazole-4-carboxamide. It participates in amino-acid biosynthesis; L-histidine biosynthesis; L-histidine from 5-phospho-alpha-D-ribose 1-diphosphate: step 2/9. It functions in the pathway amino-acid biosynthesis; L-histidine biosynthesis; L-histidine from 5-phospho-alpha-D-ribose 1-diphosphate: step 3/9. This Xanthomonas campestris pv. campestris (strain ATCC 33913 / DSM 3586 / NCPPB 528 / LMG 568 / P 25) protein is Histidine biosynthesis bifunctional protein HisIE.